A 593-amino-acid chain; its full sequence is High affinity cGMP-specific 3',5'-cyclic phosphodiesterase 9A (593 aa).

Residues 87–142 form a disordered region; the sequence is SAGVEDKRTTSRGQSAERPLRDRRVVGLEQPRREGAFESGQVEPRPREPQGCCQEG. Residues 104-122 show a composition bias toward basic and acidic residues; the sequence is RPLRDRRVVGLEQPRREGA. One can recognise a PDEase domain in the interval 236–557; that stretch reads PRRDVPTYPK…DRYEELKRID (322 aa). Residue H312 is the Proton donor of the active site. 312-316 serves as a coordination point for 3',5'-cyclic GMP; that stretch reads HNFRH. Zn(2+) is bound by residues H316, H352, and D353. D353 is a 3',5'-cyclic GMP binding site. D353 is a binding site for Mg(2+). Position 379 is a phosphoserine (S379). Residues D462, Y484, and 512 to 513 contribute to the 3',5'-cyclic GMP site; that span reads AQ. Zn(2+) is bound at residue D462. Residues 564–593 form a disordered region; that stretch reads QKKTDSLTSGATEKSRERSRDVKNSEGDCA. The segment covering 576 to 593 has biased composition (basic and acidic residues); it reads EKSRERSRDVKNSEGDCA.

The protein belongs to the cyclic nucleotide phosphodiesterase family. PDE9 subfamily. In terms of assembly, homodimer. Zn(2+) is required as a cofactor. Mg(2+) serves as cofactor.

The protein resides in the cell projection. The protein localises to the ruffle membrane. It localises to the cytoplasm. It is found in the perinuclear region. Its subcellular location is the golgi apparatus. The protein resides in the endoplasmic reticulum. The protein localises to the cell membrane. It localises to the sarcolemma. It catalyses the reaction 3',5'-cyclic GMP + H2O = GMP + H(+). Its pathway is purine metabolism; 3',5'-cyclic GMP degradation; GMP from 3',5'-cyclic GMP: step 1/1. Specifically inhibited by a compound named 3r ((R)-2-((1-cyclopentyl-4-hydroxy-1H-pyrazolo[3,4-d]pyrimidin-6- yl)amino)-N-(4-methoxyphenyl)propanamide); the inhibitor forms a hydrogen bond with Tyr-484, Ala-512 and Gln-513. Functionally, specifically hydrolyzes the second messenger cGMP, which is a key regulator of many important physiological processes. Highly specific: compared to other members of the cyclic nucleotide phosphodiesterase family, has the highest affinity and selectivity for cGMP. Specifically regulates natriuretic-peptide-dependent cGMP signaling in heart, acting as a regulator of cardiac hypertrophy in myocytes and muscle. Does not regulate nitric oxide-dependent cGMP in heart. Additional experiments are required to confirm whether its ability to hydrolyze natriuretic-peptide-dependent cGMP is specific to heart or is a general feature of the protein. In brain, involved in cognitive function, such as learning and long-term memory. The chain is High affinity cGMP-specific 3',5'-cyclic phosphodiesterase 9A (PDE9A) from Pan troglodytes (Chimpanzee).